The following is a 337-amino-acid chain: Adenine deaminase (337 aa).

The Zn(2+) site is built by His-14, His-16, and His-194. Glu-197 (proton donor) is an active-site residue. Asp-275 contributes to the Zn(2+) binding site. A substrate-binding site is contributed by Asp-276.

It belongs to the metallo-dependent hydrolases superfamily. Adenosine and AMP deaminases family. Adenine deaminase type 2 subfamily. The cofactor is Zn(2+).

The enzyme catalyses adenine + H2O + H(+) = hypoxanthine + NH4(+). Its function is as follows. Catalyzes the hydrolytic deamination of adenine to hypoxanthine. Plays an important role in the purine salvage pathway and in nitrogen catabolism. The sequence is that of Adenine deaminase from Vibrio parahaemolyticus serotype O3:K6 (strain RIMD 2210633).